The chain runs to 256 residues: Major prion protein (256 aa).

Residues 1–24 (MVKSHIGSWILVLFVAMWSDVGLC) form the signal peptide. The interval 25–233 (KKRPKPGGGW…ESQAYYQRGA (209 aa)) is interaction with GRB2, ERI3 and SYN1. The segment at 28–110 (PKPGGGWNTG…QWNKPSKPKT (83 aa)) is disordered. Repeat copies occupy residues 54 to 62 (PQGGGGWGQ), 63 to 70 (PHGGGWGQ), 71 to 78 (PHGGGWGQ), 79 to 86 (PHGGGWGQ), and 87 to 95 (PHGGGGWGQ). A 5 X 8 AA tandem repeats of P-H-G-G-G-W-G-Q region spans residues 54–95 (PQGGGGWGQPHGGGWGQPHGGGWGQPHGGGWGQPHGGGGWGQ). A compositionally biased stretch (gly residues) spans 55 to 97 (QGGGGWGQPHGGGWGQPHGGGWGQPHGGGWGQPHGGGGWGQGG). Positions 64, 65, 66, 72, 73, 74, 80, 81, 82, 88, 90, and 91 each coordinate Cu(2+). A disulfide bridge links cysteine 182 with cysteine 217. N-linked (GlcNAc...) (complex) asparagine glycans are attached at residues asparagine 184 and asparagine 200. A lipid anchor (GPI-anchor amidated alanine) is attached at alanine 233. Residues 234-256 (SVILFSSPPVILLISFLIFLIVG) constitute a propeptide, removed in mature form.

The protein belongs to the prion family. As to quaternary structure, monomer and homodimer. Has a tendency to aggregate into amyloid fibrils containing a cross-beta spine, formed by a steric zipper of superposed beta-strands. Soluble oligomers may represent an intermediate stage on the path to fibril formation. Copper binding may promote oligomerization. Interacts with GRB2, APP, ERI3/PRNPIP and SYN1. Mislocalized cytosolically exposed PrP interacts with MGRN1; this interaction alters MGRN1 subcellular location and causes lysosomal enlargement. Interacts with KIAA1191.

It localises to the cell membrane. The protein resides in the golgi apparatus. In terms of biological role, its primary physiological function is unclear. Has cytoprotective activity against internal or environmental stresses. May play a role in neuronal development and synaptic plasticity. May be required for neuronal myelin sheath maintenance. May play a role in iron uptake and iron homeostasis. Soluble oligomers are toxic to cultured neuroblastoma cells and induce apoptosis (in vitro). Association with GPC1 (via its heparan sulfate chains) targets PRNP to lipid rafts. Also provides Cu(2+) or Zn(2+) for the ascorbate-mediated GPC1 deaminase degradation of its heparan sulfate side chains. The protein is Major prion protein (PRNP) of Ovis aries (Sheep).